A 249-amino-acid polypeptide reads, in one-letter code: Expansin-A19 (249 aa).

The first 21 residues, 1 to 21, serve as a signal peptide directing secretion; that stretch reads MGNIFLQLLAVVALCIAPARS. The Expansin-like EG45 domain occupies 41–154; it reads GGACGYGNLY…QQVKCWRYGG (114 aa). N116 and N216 each carry an N-linked (GlcNAc...) asparagine glycan. Residues 164–243 form the Expansin-like CBD domain; that stretch reads YFELVLVTNM…GWSFGQTFST (80 aa).

Belongs to the expansin family. Expansin A subfamily.

The protein localises to the secreted. The protein resides in the cell wall. It localises to the membrane. Its function is as follows. May cause loosening and extension of plant cell walls by disrupting non-covalent bonding between cellulose microfibrils and matrix glucans. No enzymatic activity has been found. May be required for rapid internodal elongation in deepwater rice during submergence. The sequence is that of Expansin-A19 (EXPA19) from Oryza sativa subsp. japonica (Rice).